Consider the following 1098-residue polypeptide: Ubiquitin carboxyl-terminal hydrolase 36 (1098 aa).

Residues 72–86 are compositionally biased toward basic and acidic residues; sequence RHRSGDELQARKPGT. Residues 72–97 are disordered; it reads RHRSGDELQARKPGTERVSGSGGDGV. One can recognise a USP domain in the interval 122 to 423; the sequence is AGLHNLGNTC…QAYVLFYLRI (302 aa). C131 functions as the Nucleophile in the catalytic mechanism. The active-site Proton acceptor is the H382. Disordered regions lie at residues 428 to 464 and 483 to 574; these read KSPEGPVSRVGATLPSRPKVVPEHSKKSPGNGVVPSP and EVGV…RDTI. Phosphoserine occurs at positions 429, 463, 547, and 578. Residues 540 to 558 show a composition bias toward low complexity; sequence PLQSLTTSPTTSQGSPGTG. The interval 589 to 640 is disordered; that stretch reads GHRLKGEGSGVDLEKGDSSSSSPEHSASSDPAKAPQTAESRAAHACDSQGTN. The span at 606-617 shows a compositional bias: low complexity; it reads SSSSSPEHSASS. S663 carries the phosphoserine modification. Disordered regions lie at residues 664–710 and 722–973; these read PALS…SPSA and HPVV…ALSV. Residues 665–677 show a composition bias toward polar residues; the sequence is ALSSTTTEPTSLM. S678 carries the phosphoserine modification. Over residues 683 to 692 the composition is skewed to low complexity; it reads KKLALSAKKA. Phosphoserine is present on S709. The span at 746 to 763 shows a compositional bias: low complexity; sequence HPHSASLSSSSAKPLGTS. Over residues 853–878 the composition is skewed to polar residues; that stretch reads GQFQDQSWSSGSQKEEGTQPQVNGHQ. Over residues 889–898 the composition is skewed to basic residues; sequence SSRKRRKRKR. The segment covering 901-917 has biased composition (polar residues); that stretch reads GLSQEATPSQDLIQHSC. Positions 921-932 are enriched in basic and acidic residues; that stretch reads DHSEPEARTELQ. Residues 933–943 show a composition bias toward basic residues; it reads KKKKKKRRKRK. A compositionally biased stretch (basic and acidic residues) spans 944–960; the sequence is PEPQQDEESKHPGDQRS.

Belongs to the peptidase C19 family. As to quaternary structure, interacts with isoform 3 of FBXW7; the interaction inhibits MYC degradation induced by SCF(FBW7) complex. Interacts with NTRK1; USP36 does not deubiquitinate NTRK1. Interacts with NEDD4L (via domains WW1, 3 and 4); the interaction inhibits ubiquitination of, at least, NTRK1, KCNQ2 and KCNQ3 by NEDD4L. Interacts (via C-terminus) with EXOSC10 (via C-terminus); the interaction is facilitated by the association with RNA and promotes sumoylation of EXOSC10. In terms of processing, polyubiquitinated by NEDD4L, no effect on USP36 protein levels. Both proteins interact with and regulate each other's ubiquitination levels.

The protein localises to the nucleus. Its subcellular location is the nucleolus. The protein resides in the cytoplasm. It carries out the reaction Thiol-dependent hydrolysis of ester, thioester, amide, peptide and isopeptide bonds formed by the C-terminal Gly of ubiquitin (a 76-residue protein attached to proteins as an intracellular targeting signal).. Deubiquitinase essential for the regulation of nucleolar structure and function. Required for cell and organism viability. Plays an important role in ribosomal RNA processing and protein synthesis, which is mediated, at least in part, through deubiquitination of DHX33, NPM1 and FBL, regulating their protein stability. Functions as a transcriptional repressor by deubiquiting histone H2B at the promoters of genes critical for cellular differentiation, such as CDKN1A, thereby preventing histone H3 'Lys-4' trimethylation (H3K4). Specifically deubiquitinates MYC in the nucleolus, leading to prevent MYC degradation by the proteasome: acts by specifically interacting with isoform 3 of FBXW7 (FBW7gamma) in the nucleolus and counteracting ubiquitination of MYC by the SCF(FBW7) complex. In contrast, it does not interact with isoform 1 of FBXW7 (FBW7alpha) in the nucleoplasm. Interacts to and regulates the actions of E3 ubiquitin-protein ligase NEDD4L over substrates such as NTRK1, KCNQ2 and KCNQ3, affecting their expression an functions. Deubiquitinates SOD2, regulates SOD2 protein stability. Deubiquitinase activity is required to control selective autophagy activation by ubiquitinated proteins. Promotes CEP63 stabilization through 'Lys-48'-linked deubiquitination leading to increased stability. Acts as a SUMO ligase to promote EXOSC10 sumoylation critical for the nucleolar RNA exosome function in rRNA processing. Binds to pre-rRNAs. The protein is Ubiquitin carboxyl-terminal hydrolase 36 (Usp36) of Mus musculus (Mouse).